Here is a 246-residue protein sequence, read N- to C-terminus: Ribosomal RNA small subunit methyltransferase J (246 aa).

S-adenosyl-L-methionine contacts are provided by residues 115–116 (ER) and Asp-169.

It belongs to the methyltransferase superfamily. RsmJ family.

Its subcellular location is the cytoplasm. It catalyses the reaction guanosine(1516) in 16S rRNA + S-adenosyl-L-methionine = N(2)-methylguanosine(1516) in 16S rRNA + S-adenosyl-L-homocysteine + H(+). Specifically methylates the guanosine in position 1516 of 16S rRNA. This is Ribosomal RNA small subunit methyltransferase J from Buchnera aphidicola subsp. Acyrthosiphon pisum (strain 5A).